The chain runs to 142 residues: Small ribosomal subunit protein bS6 (142 aa).

The segment covering 110-133 (NKKPSHAKEKHEKTEHTHSHHTEE) has biased composition (basic and acidic residues). Positions 110-142 (NKKPSHAKEKHEKTEHTHSHHTEEAESVGSHSE) are disordered.

It belongs to the bacterial ribosomal protein bS6 family.

Binds together with bS18 to 16S ribosomal RNA. The chain is Small ribosomal subunit protein bS6 (rpsF) from Helicobacter pylori (strain ATCC 700392 / 26695) (Campylobacter pylori).